The sequence spans 489 residues: MTHCINGQWLAGEGETVIKTDPVSGEVLWQGRGASAAQVAAACEAARGAFPAWARQPFAERQAIVEKFAALLDTNRVELSEAIARETGKPRWETQTEVQAMINKVAISLRAWHVRCPEQVEGESSVRHRPHGVMAVFGPYNFPGHLPNGHIVPALLAGNCVLFKPSELTPLTAEIAMRLWNHAGLPQGVLHLLQGGRETGQALVQQPQVDGILFTGSAATGYQLHRQLAGQPEKMLALEMGGNNALIVEDPDDIDAAVHIAIQSAFISAGQRCTCARRLLVRRGAAGDAFLARLAAVAATIRVGRWNDEPQPFMGSVISPQAAEKIYAEWQARIDAGGNVLLPMCWPERSSALLTPGIIDVTEVRDLPDEEIFGPLLQVMRYDDFTHAIQLANDTRYGLACGLISPQREKFDRLLVEARAGIVNWNKPLTGAASTAPFGGVGASGNHRPSAWYAADYCAWPMASLASADLSLPDTLSPGLDFSVNKEAE.

216-221 (GSAATG) lines the NAD(+) pocket. Residues Glu239 and Cys273 contribute to the active site.

This sequence belongs to the aldehyde dehydrogenase family. AstD subfamily.

The enzyme catalyses N-succinyl-L-glutamate 5-semialdehyde + NAD(+) + H2O = N-succinyl-L-glutamate + NADH + 2 H(+). Its pathway is amino-acid degradation; L-arginine degradation via AST pathway; L-glutamate and succinate from L-arginine: step 4/5. Its function is as follows. Catalyzes the NAD-dependent reduction of succinylglutamate semialdehyde into succinylglutamate. This is N-succinylglutamate 5-semialdehyde dehydrogenase from Erwinia tasmaniensis (strain DSM 17950 / CFBP 7177 / CIP 109463 / NCPPB 4357 / Et1/99).